The primary structure comprises 270 residues: Autophagy protein 5 (270 aa).

Lysine 144 participates in a covalent cross-link: Glycyl lysine isopeptide (Lys-Gly) (interchain with G-Cter in ATG12).

This sequence belongs to the ATG5 family. In terms of assembly, conjugated with ATG12. Conjugated to ATG12; which is essential for autophagy.

It is found in the preautophagosomal structure membrane. In terms of biological role, involved in cytoplasm to vacuole transport (Cvt) and autophagic vesicle formation. Autophagy is essential for maintenance of amino acid levels and protein synthesis under nitrogen starvation. Required for selective autophagic degradation of the nucleus (nucleophagy). Also required for mitophagy, which eliminates defective or superfluous mitochondria in order to fulfill cellular energy requirements and prevent excess ROS production. Conjugation with ATG12, through a ubiquitin-like conjugating system involving ATG7 as an E1-like activating enzyme and ATG10 as an E2-like conjugating enzyme, is essential for its function. The ATG12-ATG5 conjugate acts as an E3-like enzyme which is required for lipidation of ATG8 and ATG8 association to the vesicle membranes. This is Autophagy protein 5 (ATG5) from Candida glabrata (strain ATCC 2001 / BCRC 20586 / JCM 3761 / NBRC 0622 / NRRL Y-65 / CBS 138) (Yeast).